The primary structure comprises 422 residues: Histidine--tRNA ligase (422 aa).

Belongs to the class-II aminoacyl-tRNA synthetase family. Homodimer.

Its subcellular location is the cytoplasm. It carries out the reaction tRNA(His) + L-histidine + ATP = L-histidyl-tRNA(His) + AMP + diphosphate + H(+). This chain is Histidine--tRNA ligase, found in Mycolicibacterium vanbaalenii (strain DSM 7251 / JCM 13017 / BCRC 16820 / KCTC 9966 / NRRL B-24157 / PYR-1) (Mycobacterium vanbaalenii).